Here is a 110-residue protein sequence, read N- to C-terminus: UPF0367 protein Syncc9605_2376 (110 aa).

This sequence belongs to the UPF0367 family.

This Synechococcus sp. (strain CC9605) protein is UPF0367 protein Syncc9605_2376.